Consider the following 203-residue polypeptide: Outer-membrane lipoprotein carrier protein (203 aa).

A signal peptide spans 1 to 20; sequence MKKWLAISCLIAGMTSTAVY.

Belongs to the LolA family. Monomer.

It localises to the periplasm. Functionally, participates in the translocation of lipoproteins from the inner membrane to the outer membrane. Only forms a complex with a lipoprotein if the residue after the N-terminal Cys is not an aspartate (The Asp acts as a targeting signal to indicate that the lipoprotein should stay in the inner membrane). The protein is Outer-membrane lipoprotein carrier protein of Pectobacterium carotovorum subsp. carotovorum (strain PC1).